Reading from the N-terminus, the 129-residue chain is Iron-sulfur cluster assembly 1 homolog, mitochondrial (129 aa).

The transit peptide at 1 to 12 (MASSVVRATVRA) directs the protein to the mitochondrion. 3 residues coordinate Fe cation: cysteine 57, cysteine 121, and cysteine 123.

The protein belongs to the HesB/IscA family.

It is found in the mitochondrion. Its function is as follows. Involved in the maturation of mitochondrial 4Fe-4S proteins functioning late in the iron-sulfur cluster assembly pathway. Probably involved in the binding of an intermediate of Fe/S cluster assembly. This is Iron-sulfur cluster assembly 1 homolog, mitochondrial (ISCA1) from Gallus gallus (Chicken).